A 670-amino-acid polypeptide reads, in one-letter code: Solute carrier organic anion transporter family member 1A5 (670 aa).

Residues 1–20 lie on the Cytoplasmic side of the membrane; sequence MGETEKRVATHEVRCFSKIK. Residues 21-40 form a helical membrane-spanning segment; the sequence is MFLLALTWAYVSKSLSGIYM. At 41–59 the chain is on the extracellular side; sequence NTMLTQIERQFDIPTSIVG. A helical transmembrane segment spans residues 60–80; that stretch reads FINGSFEIGNLLLIIFVSYFG. Residues 81-86 are Cytoplasmic-facing; the sequence is TKLHRP. A helical transmembrane segment spans residues 87-111; the sequence is IMIGVGCVIMGLGCFLMSLPHFLMG. Residues 112 to 155 are Extracellular-facing; the sequence is RYEYETTISPTSNLSSNSFLCMENRSQTLKPTQDPAECIKEMKS. Asparagine 124 and asparagine 135 each carry an N-linked (GlcNAc...) asparagine glycan. The chain crosses the membrane as a helical span at residues 156-184; that stretch reads LMWIYVLVGNIIRGIGETPIMPLGISYIE. At 185–203 the chain is on the cytoplasmic side; sequence DFAKSENSPLYIGILETGK. Residues 204–224 form a helical membrane-spanning segment; sequence VFGPIVGLLLGSFCASIYVDT. Residues 225–242 lie on the Extracellular side of the membrane; it reads GSVNTDDLTITPTDTRWV. Residues 243–267 traverse the membrane as a helical segment; that stretch reads GAWWIGFLICAGVNILSSIPFFFFP. At 268–311 the chain is on the cytoplasmic side; sequence KTLPKEGLQDDVDGTNNDKEEKHREKAKEENRGITKDFLPFMKS. The chain crosses the membrane as a helical span at residues 312 to 333; that stretch reads LSCNPIYMLLILTSVLQINAFI. Residues 334–353 are Extracellular-facing; it reads NMFTFLPKYLEQQYGKSTAE. The chain crosses the membrane as a helical span at residues 354-377; sequence VVLLIGVYNLPPICIGYLLIGFIM. Topologically, residues 378–381 are cytoplasmic; it reads KKFK. Residues 382–405 form a helical membrane-spanning segment; it reads ITVKKAAYMAFCLSLFEYLLYFLH. Residues 406–513 are Extracellular-facing; the sequence is FMITCDNFPV…PECANKLQYF (108 aa). Positions 433-488 constitute a Kazal-like domain; sequence NKVLADCNRGCSCSTNSWDPVCGDNGLAYMSACLAGCKKSVGTGTNMVFQNCSCIR. Cystine bridges form between cysteine 439/cysteine 469, cysteine 445/cysteine 465, and cysteine 454/cysteine 486. Residues asparagine 483 and asparagine 492 are each glycosylated (N-linked (GlcNAc...) asparagine). Residues 514-536 traverse the membrane as a helical segment; it reads LIMSVIGSFIYSITAIPGYMVLL. The Cytoplasmic portion of the chain corresponds to 537–545; the sequence is RCIKPEEKS. Residues 546–571 traverse the membrane as a helical segment; that stretch reads LGIGLHAFCTRVFAGIPAPIYFGALI. At 572 to 605 the chain is on the extracellular side; it reads DRTCLHWGTLKCGEPGACRMYNINNFRRIYLVLP. A helical transmembrane segment spans residues 606 to 623; it reads AALRGSSYLPALFILILM. The Cytoplasmic portion of the chain corresponds to 624 to 670; sequence RKFQFPGEIDSSETELAEMKITVKKSECTDVHGSPQVENDGELKTRL.

The protein belongs to the organo anion transporter (TC 2.A.60) family. Highly expressed in the kidney, moderately abundant in the retina, and even lower in the liver. Expressed (at protein level) in the small intestine. Expressed at lower levels in brain,lung, and retina.

The protein localises to the cell membrane. Its subcellular location is the basal cell membrane. It catalyses the reaction taurocholate(out) = taurocholate(in). It carries out the reaction glycocholate(out) = glycocholate(in). The enzyme catalyses taurochenodeoxycholate(out) = taurochenodeoxycholate(in). The catalysed reaction is tauroursodeoxycholate(out) = tauroursodeoxycholate(in). It catalyses the reaction 3,3',5'-triiodo-L-thyronine(out) = 3,3',5'-triiodo-L-thyronine(in). It carries out the reaction L-thyroxine(out) = L-thyroxine(in). The enzyme catalyses taurodeoxycholate(out) = taurodeoxycholate(in). The catalysed reaction is glycodeoxycholate(out) = glycodeoxycholate(in). It catalyses the reaction glycochenodeoxycholate(out) = glycochenodeoxycholate(in). It carries out the reaction glycoursodeoxycholate(out) = glycoursodeoxycholate(in). The enzyme catalyses estrone 3-sulfate(out) = estrone 3-sulfate(in). The catalysed reaction is prostaglandin E2(out) = prostaglandin E2(in). It catalyses the reaction substance P(out) = substance P(in). Na(+)-independent transporter that mediates the cellular uptake of a broad range of organic anions such as the endogenous bile salts cholate and deoxycholate, either in their unconjugated or conjugated forms (taurocholate and glycocholate), estrone 3-sulfate and prostaglandin E2, at the plasma membrane. Responsible for intestinal absorption of bile acids. Capable of thyroid hormone transport (both T3 or 3,3',5'-triiodo-L-thyronine, and T4 or L-tyroxine). Plays roles in blood-brain and -cerebrospinal fluid barrier transport of organic anions and signal mediators, and in hormone uptake by neural cells. May also play a role in the reuptake of neuropeptides such as substance P/TAC1 and vasoactive intestinal peptide/VIP released from retinal neurons. Shows a pH-sensitive substrate specificity which may be ascribed to the protonation state of the binding site and leads to a stimulation of substrate transport in an acidic microenvironment. Hydrogencarbonate/HCO3(-) acts as the probable counteranion that exchanges for organic anions. May contribute to regulate the transport of organic compounds in testis across the blood-testis-barrier. The chain is Solute carrier organic anion transporter family member 1A5 (Slco1a5) from Rattus norvegicus (Rat).